The primary structure comprises 247 residues: Putative cyclin-T1-1 (247 aa).

The protein belongs to the cyclin family. Cyclin T subfamily.

The sequence is that of Putative cyclin-T1-1 (CYCT1-1) from Arabidopsis thaliana (Mouse-ear cress).